Reading from the N-terminus, the 283-residue chain is Pantothenate synthetase (283 aa).

30–37 (MGYLHDGH) provides a ligand contact to ATP. The active-site Proton donor is histidine 37. Glutamine 61 contributes to the (R)-pantoate binding site. A beta-alanine-binding site is contributed by glutamine 61. Residue 148–151 (GQKD) participates in ATP binding. Residue glutamine 154 coordinates (R)-pantoate. 185–188 (MSSR) lines the ATP pocket.

It belongs to the pantothenate synthetase family. Homodimer.

It is found in the cytoplasm. The catalysed reaction is (R)-pantoate + beta-alanine + ATP = (R)-pantothenate + AMP + diphosphate + H(+). Its pathway is cofactor biosynthesis; (R)-pantothenate biosynthesis; (R)-pantothenate from (R)-pantoate and beta-alanine: step 1/1. In terms of biological role, catalyzes the condensation of pantoate with beta-alanine in an ATP-dependent reaction via a pantoyl-adenylate intermediate. The protein is Pantothenate synthetase of Carboxydothermus hydrogenoformans (strain ATCC BAA-161 / DSM 6008 / Z-2901).